A 521-amino-acid chain; its full sequence is Cytochrome P450 1A1 (521 aa).

F229 provides a ligand contact to substrate. Residue C463 participates in heme binding.

Belongs to the cytochrome P450 family. The cofactor is heme.

The protein localises to the endoplasmic reticulum membrane. It localises to the microsome membrane. The catalysed reaction is an organic molecule + reduced [NADPH--hemoprotein reductase] + O2 = an alcohol + oxidized [NADPH--hemoprotein reductase] + H2O + H(+). Functionally, cytochromes P450 are a group of heme-thiolate monooxygenases. They oxidize a variety of structurally unrelated compounds, including steroids, fatty acids, and xenobiotics. In Chelon saliens (Leaping mullet), this protein is Cytochrome P450 1A1 (cyp1a1).